A 295-amino-acid chain; its full sequence is Lipoyl synthase (295 aa).

[4Fe-4S] cluster-binding residues include cysteine 34, cysteine 39, cysteine 45, cysteine 60, cysteine 64, cysteine 67, and serine 273. The region spanning 46–262 is the Radical SAM core domain; that stretch reads WNKRHATIMV…KRMAYAKGFS (217 aa).

It belongs to the radical SAM superfamily. Lipoyl synthase family. It depends on [4Fe-4S] cluster as a cofactor.

It localises to the cytoplasm. The catalysed reaction is [[Fe-S] cluster scaffold protein carrying a second [4Fe-4S](2+) cluster] + N(6)-octanoyl-L-lysyl-[protein] + 2 oxidized [2Fe-2S]-[ferredoxin] + 2 S-adenosyl-L-methionine + 4 H(+) = [[Fe-S] cluster scaffold protein] + N(6)-[(R)-dihydrolipoyl]-L-lysyl-[protein] + 4 Fe(3+) + 2 hydrogen sulfide + 2 5'-deoxyadenosine + 2 L-methionine + 2 reduced [2Fe-2S]-[ferredoxin]. It participates in protein modification; protein lipoylation via endogenous pathway; protein N(6)-(lipoyl)lysine from octanoyl-[acyl-carrier-protein]: step 2/2. In terms of biological role, catalyzes the radical-mediated insertion of two sulfur atoms into the C-6 and C-8 positions of the octanoyl moiety bound to the lipoyl domains of lipoate-dependent enzymes, thereby converting the octanoylated domains into lipoylated derivatives. The chain is Lipoyl synthase from Anaplasma phagocytophilum (strain HZ).